We begin with the raw amino-acid sequence, 301 residues long: PWI domain-containing protein C825.05c (301 aa).

In terms of domain architecture, PWI spans 26-137 (STKFPASYDT…YGIPEKFILE (112 aa)). Ser86 bears the Phosphoserine mark. Composition is skewed to basic and acidic residues over residues 145 to 182 (LKDRTEASKEESKTVTDHSNRRESRRESTYYDSRERNG), 189 to 205 (TLDRKRFHDASDTERNR), and 215 to 229 (RFSEKPRGERYDIRS). Residues 145-301 (LKDRTEASKE…ESDSGTQKHD (157 aa)) form a disordered region. Phosphoserine is present on Ser199. Residues 244–253 (PTRRRERHYR) show a composition bias toward basic residues. Basic and acidic residues predominate over residues 254-289 (TRDDEGFDEFGRSRDGRWRESRTSYREKHRYDRDAL). Polar residues predominate over residues 290 to 301 (SSESDSGTQKHD). Ser291 is subject to Phosphoserine.

It is found in the nucleus. In Schizosaccharomyces pombe (strain 972 / ATCC 24843) (Fission yeast), this protein is PWI domain-containing protein C825.05c.